The sequence spans 372 residues: Stress-activated protein kinase JNK (372 aa).

The 297-residue stretch at 24 to 320 folds into the Protein kinase domain; that stretch reads YINLRPIGSG…VDEALKHEYI (297 aa). ATP is bound by residues 31 to 36 and Lys53; that span reads GSGAQG. Asp149 acts as the Proton acceptor in catalysis. A Phosphothreonine modification is found at Thr181. A TXY motif is present at residues 181–183; it reads TPY. Tyr183 carries the post-translational modification Phosphotyrosine.

Belongs to the protein kinase superfamily. CMGC Ser/Thr protein kinase family. MAP kinase subfamily. In terms of assembly, interacts with MKP-4 (via tyrosine-protein phosphatase domain); the interaction dephosphorylates bsk. Requires Mg(2+) as cofactor. Dually phosphorylated on Thr-181 and Tyr-183, which activates the enzyme. During gastrulation, expression is seen in cells undergoing morphogenetic movements. By stage 9 of embryonic development, expression is ubiquitous. At stages 12-14, expression occurs in epidermis and central nervous system. At stage 15, expression is restricted to ventral nerve cord, brain and some peripheral neurons. In larvae, expression is seen in all imaginal disks, with highest levels in wing and eye disks, and in the CNS. Adults express the protein in fat body and hemocytes.

It is found in the nucleus. The protein localises to the cytoplasm. It carries out the reaction L-seryl-[protein] + ATP = O-phospho-L-seryl-[protein] + ADP + H(+). The enzyme catalyses L-threonyl-[protein] + ATP = O-phospho-L-threonyl-[protein] + ADP + H(+). Activated by threonine and tyrosine phosphorylation by the dual specificity kinase, hep. Inhibited by dual specificity phosphatase, puckered. Functionally, mitogen-activated protein kinase and key component of the c-Jun N-terminal kinase (JNK) pathway which phosphorylate and activate transcription factors involved in a wide range of biological processes including response to various stresses, cellular proliferation, differentiation and migration, and regulation of cell shape. Responds to activation by environmental stress by phosphorylating a number of transcription factors, primarily components of AP-1 such as Jra and also the transcriptional repressor aop, and thus regulates transcriptional activity. Component of the immune response activated by bacterial infection, and is involved in wound healing and in dorsal closure, a morphogenetic movement during embryogenesis. Functions in the systematic response to wounding acting downstream of the Hayan-phenoloxidase PPO1 cascade. During epidermal wound healing involved in cellular polarization by inducing the translocation of sktl and mys/integrin beta to the trailing edge. Exhibits cytoprotective activity in neuronal cells in response to wounding to the integument. Controls the expression of a phosphatase, puckered, at the edges of wounded epidermal tissue and in the dorsal epithelium during dorsal closure. Regulates the activity of SREBP in neurons and thereby the accumulation of lipids in glia. Plays a role in positively regulating the expression of DIP2 independently of AP-1, thereby ensuring proper axon guidance in mushroom bodies. In enterocytes and differentiating progenitors of the gut that are experiencing inorganic phosphate (Pi) deficiency, activated by Cka to induce nearby progenitor cells to proliferate and form new absorptive cells, probably helping the organism to cope with the nutrient deficiency by maximizing absorption of dietary Pi. The sequence is that of Stress-activated protein kinase JNK from Drosophila melanogaster (Fruit fly).